The following is a 135-amino-acid chain: Large ribosomal subunit protein eL32 (135 aa).

The protein belongs to the eukaryotic ribosomal protein eL32 family.

This Methanococcus maripaludis (strain C7 / ATCC BAA-1331) protein is Large ribosomal subunit protein eL32.